The following is an 88-amino-acid chain: Small ribosomal subunit protein bS20 (88 aa).

The interval 1–28 (MANTVQARKRARQAVKQNEHNSSLRSKL) is disordered.

This sequence belongs to the bacterial ribosomal protein bS20 family.

Its function is as follows. Binds directly to 16S ribosomal RNA. The chain is Small ribosomal subunit protein bS20 from Polynucleobacter necessarius subsp. necessarius (strain STIR1).